A 329-amino-acid chain; its full sequence is Diaminopimelate epimerase (329 aa).

Residues Asn14 and Asn73 each contribute to the substrate site. Catalysis depends on Cys82, which acts as the Proton donor. Residues 83–84, Asn170, Asn206, and 224–225 each bind substrate; these read GN and ER. The active-site Proton acceptor is the Cys233. 234-235 provides a ligand contact to substrate; that stretch reads GT.

It belongs to the diaminopimelate epimerase family. In terms of assembly, homodimer.

It is found in the cytoplasm. It carries out the reaction (2S,6S)-2,6-diaminopimelate = meso-2,6-diaminopimelate. It functions in the pathway amino-acid biosynthesis; L-lysine biosynthesis via DAP pathway; DL-2,6-diaminopimelate from LL-2,6-diaminopimelate: step 1/1. Catalyzes the stereoinversion of LL-2,6-diaminopimelate (L,L-DAP) to meso-diaminopimelate (meso-DAP), a precursor of L-lysine and an essential component of the bacterial peptidoglycan. The polypeptide is Diaminopimelate epimerase (Listeria monocytogenes serotype 4b (strain F2365)).